The sequence spans 894 residues: Low-affinity phosphate transporter PHO91 (894 aa).

The 256-residue stretch at 1 to 256 folds into the SPX domain; it reads MKFSHSLQFN…NTNLKQNYLN (256 aa). Disordered regions lie at residues 124–160 and 293–321; these read QHQL…LTDM and RPSN…EDGN. The segment covering 132-144 has biased composition (basic residues); the sequence is RNRKSKSQQRQRR. A compositionally biased stretch (polar residues) spans 151 to 160; the sequence is TDSNPSLTDM. Phosphoserine is present on residues Ser295, Ser311, and Ser312. 13 consecutive transmembrane segments (helical) span residues 430-450, 474-494, 511-531, 557-577, 602-622, 642-662, 682-702, 706-726, 738-758, 777-797, 799-819, 824-844, and 874-894; these read LKFL…LTPF, TIPL…FPVI, FILS…FTLA, FILL…SNVA, ALIL…PIAS, FMIA…LLII, FTLK…LWCL, ISGI…VFFG, FMWT…AVSS, PIFI…TFVS, TVAA…LPSG, LLIV…TSGF, and SLLS…VMGF.

The protein belongs to the CitM (TC 2.A.11) transporter family. Ubiquitinated by RSP5. RSP5-mediated ubiquitination initiates internalization and degradation by the endocytic pathway.

It localises to the vacuole membrane. In terms of biological role, vacuolar phosphate transporter that probably exports phosphate from the vacuolar lumen to the cytosol. This is Low-affinity phosphate transporter PHO91 (PHO91) from Saccharomyces cerevisiae (strain ATCC 204508 / S288c) (Baker's yeast).